Consider the following 159-residue polypeptide: UPF0699 transmembrane protein YdbS (159 aa).

2 consecutive transmembrane segments (helical) span residues 22–42 and 47–67; these read IIIS…SYYF and WISG…VFII.

It belongs to the UPF0699 family.

It is found in the cell membrane. This is UPF0699 transmembrane protein YdbS (ydbS) from Bacillus subtilis (strain 168).